The following is a 715-amino-acid chain: ATP-dependent zinc metalloprotease YME1L1 (715 aa).

Positions 31–54 (VSVNTSASPKQHRDTVAEHEAPSS) are disordered. Residues 41–52 (QHRDTVAEHEAP) are compositionally biased toward basic and acidic residues. A helical membrane pass occupies residues 238 to 258 (ILFVLLLFGIYGLLKNPFLSV). ATP contacts are provided by Val-283, Thr-325, Gly-326, Lys-327, Thr-328, and Leu-329. Residue His-541 participates in Zn(2+) binding. Glu-542 is an active-site residue. The Zn(2+) site is built by His-545 and Asp-619.

In the N-terminal section; belongs to the AAA ATPase family. It in the C-terminal section; belongs to the peptidase M41 family. In terms of assembly, homohexamer; may also form heterohexamers. Exists in several complexes of 600-1100 kDa. Interacts with AFG1L. Zn(2+) serves as cofactor. In terms of processing, proteolytically processed by mitochondrial processing peptidase (MPP) to generate the mature form. Degraded in an OMA1-dependent manner in response to oxidative stress.

The protein resides in the mitochondrion inner membrane. The protein localises to the mitochondrion. The catalysed reaction is ATP + H2O = ADP + phosphate + H(+). In terms of biological role, ATP-dependent metalloprotease that catalyzes the degradation of folded and unfolded proteins with a suitable degron sequence in the mitochondrial intermembrane region. Plays an important role in regulating mitochondrial morphology and function by cleaving OPA1 at position S2, giving rise to a form of OPA1 that promotes maintenance of normal mitochondrial structure and mitochondrial protein metabolism. Ensures cell proliferation, maintains normal cristae morphology and complex I respiration activity, promotes antiapoptotic activity and protects mitochondria from the accumulation of oxidatively damaged membrane proteins. Required to control the accumulation of nonassembled respiratory chain subunits (NDUFB6, OX4 and ND1). Involved in the mitochondrial adaptation in response to various signals, such as stress or developmental cues, by mediating degradation of mitochondrial proteins to rewire the mitochondrial proteome. Catalyzes degradation of mitochondrial proteins, such as translocases, lipid transfer proteins and metabolic enzymes in response to nutrient starvation in order to limit mitochondrial biogenesis: mechanistically, YME1L is activated by decreased phosphatidylethanolamine levels caused by LPIN1 activity in response to mTORC1 inhibition. Acts as a regulator of adult neural stem cell self-renewal by promoting mitochondrial proteome rewiring, preserving neural stem and progenitor cells self-renewal. Required for normal, constitutive degradation of PRELID1. Catalyzes the degradation of OMA1 in response to membrane depolarization. Mediates degradation of TIMM17A downstream of the integrated stress response (ISR). Catalyzes degradation of MICU1 when MICU1 is not assembled via an interchain disulfide. In Rattus norvegicus (Rat), this protein is ATP-dependent zinc metalloprotease YME1L1 (Yme1l1).